A 103-amino-acid chain; its full sequence is N(4)-acetylcytidine amidohydrolase (103 aa).

The ASCH domain maps to 6–101 (ITFFQRFQDD…QTQFYVIEFK (96 aa)). Lys-21 (proton acceptor) is an active-site residue. The active-site Nucleophile is the Thr-24. Glu-74 acts as the Proton donor in catalysis.

This sequence belongs to the N(4)-acetylcytidine amidohydrolase family.

The catalysed reaction is N(4)-acetylcytidine + H2O = cytidine + acetate + H(+). The enzyme catalyses N(4)-acetyl-2'-deoxycytidine + H2O = 2'-deoxycytidine + acetate + H(+). It carries out the reaction N(4)-acetylcytosine + H2O = cytosine + acetate + H(+). Its function is as follows. Catalyzes the hydrolysis of N(4)-acetylcytidine (ac4C). The protein is N(4)-acetylcytidine amidohydrolase (yqfB) of Escherichia coli O127:H6 (strain E2348/69 / EPEC).